The sequence spans 526 residues: Light-independent protochlorophyllide reductase subunit B (526 aa).

A [4Fe-4S] cluster-binding site is contributed by Asp36. Catalysis depends on Asp284, which acts as the Proton donor. A substrate-binding site is contributed by 419–420; the sequence is GL.

The protein belongs to the ChlB/BchB/BchZ family. In terms of assembly, protochlorophyllide reductase is composed of three subunits; BchL, BchN and BchB. Forms a heterotetramer of two BchB and two BchN subunits. It depends on [4Fe-4S] cluster as a cofactor.

It carries out the reaction chlorophyllide a + oxidized 2[4Fe-4S]-[ferredoxin] + 2 ADP + 2 phosphate = protochlorophyllide a + reduced 2[4Fe-4S]-[ferredoxin] + 2 ATP + 2 H2O. The protein operates within porphyrin-containing compound metabolism; bacteriochlorophyll biosynthesis (light-independent). Functionally, component of the dark-operative protochlorophyllide reductase (DPOR) that uses Mg-ATP and reduced ferredoxin to reduce ring D of protochlorophyllide (Pchlide) to form chlorophyllide a (Chlide). This reaction is light-independent. The NB-protein (BchN-BchB) is the catalytic component of the complex. The polypeptide is Light-independent protochlorophyllide reductase subunit B (Halorhodospira halophila (strain DSM 244 / SL1) (Ectothiorhodospira halophila (strain DSM 244 / SL1))).